The chain runs to 500 residues: L-arabinose isomerase (500 aa).

Mn(2+)-binding residues include Glu306, Glu333, His350, and His450.

It belongs to the arabinose isomerase family. In terms of assembly, homohexamer. It depends on Mn(2+) as a cofactor.

The catalysed reaction is beta-L-arabinopyranose = L-ribulose. It participates in carbohydrate degradation; L-arabinose degradation via L-ribulose; D-xylulose 5-phosphate from L-arabinose (bacterial route): step 1/3. Functionally, catalyzes the conversion of L-arabinose to L-ribulose. The protein is L-arabinose isomerase of Shigella flexneri serotype 5b (strain 8401).